A 1420-amino-acid polypeptide reads, in one-letter code: Putative mediator of RNA polymerase II transcription subunit 14 (1420 aa).

Residues 1–43 adopt a coiled-coil conformation; sequence MDQNQQQQQQQQQQQQQQQQQQQQQQQQQQQQQQQQQQQQQQQ. Low complexity-rich tracts occupy residues 1–43 and 449–474; these read MDQN…QQQQ and TTSSSSSSSSNNNNTASPIINRNNNN. Disordered regions lie at residues 1–59, 449–490, 750–799, and 1389–1420; these read MDQN…TTPI, TTSS…NPLS, QQDI…GYKN, and QQQQQQQQQQQQQQQQQQIENNNFASASSSIR. The segment covering 475 to 490 has biased composition (polar residues); sequence GKPNLLSTKQSNNPLS. Low complexity-rich tracts occupy residues 755–795 and 1389–1406; these read NNNN…NGNN and QQQQQQQQQQQQQQQQQQ. Residues 1382–1412 adopt a coiled-coil conformation; it reads LLIQQQQQQQQQQQQQQQQQQQQQQIENNNF. Residues 1407 to 1420 show a composition bias toward polar residues; sequence IENNNFASASSSIR.

This sequence belongs to the Mediator complex subunit 14 family. In terms of assembly, component of the Mediator complex.

It is found in the nucleus. Its function is as follows. Component of the Mediator complex, a coactivator involved in the regulated transcription of nearly all RNA polymerase II-dependent genes. Mediator functions as a bridge to convey information from gene-specific regulatory proteins to the basal RNA polymerase II transcription machinery. Mediator is recruited to promoters by direct interactions with regulatory proteins and serves as a scaffold for the assembly of a functional preinitiation complex with RNA polymerase II and the general transcription factors. In Dictyostelium discoideum (Social amoeba), this protein is Putative mediator of RNA polymerase II transcription subunit 14 (med14).